The chain runs to 351 residues: Histidinol-phosphate aminotransferase 2 (351 aa).

Lysine 210 is subject to N6-(pyridoxal phosphate)lysine.

Belongs to the class-II pyridoxal-phosphate-dependent aminotransferase family. Histidinol-phosphate aminotransferase subfamily. In terms of assembly, homodimer. Pyridoxal 5'-phosphate is required as a cofactor.

The catalysed reaction is L-histidinol phosphate + 2-oxoglutarate = 3-(imidazol-4-yl)-2-oxopropyl phosphate + L-glutamate. Its pathway is amino-acid biosynthesis; L-histidine biosynthesis; L-histidine from 5-phospho-alpha-D-ribose 1-diphosphate: step 7/9. The chain is Histidinol-phosphate aminotransferase 2 (hisC2) from Rhizobium meliloti (strain 1021) (Ensifer meliloti).